The sequence spans 252 residues: 5'-nucleotidase SurE (252 aa).

D8, D9, S39, and N95 together coordinate a divalent metal cation.

Belongs to the SurE nucleotidase family. The cofactor is a divalent metal cation.

The protein resides in the cytoplasm. It catalyses the reaction a ribonucleoside 5'-phosphate + H2O = a ribonucleoside + phosphate. In terms of biological role, nucleotidase that shows phosphatase activity on nucleoside 5'-monophosphates. The chain is 5'-nucleotidase SurE from Clostridium botulinum (strain 657 / Type Ba4).